The following is a 59-amino-acid chain: Probable stress-associated endoplasmic reticulum protein (59 aa).

A disordered region spans residues 1 to 30 (MSQSRTLRQKSQKYQENIEKRGVASPKKKE). The Cytoplasmic portion of the chain corresponds to 1–34 (MSQSRTLRQKSQKYQENIEKRGVASPKKKEDGLN). Over residues 16 to 30 (ENIEKRGVASPKKKE) the composition is skewed to basic and acidic residues. Residues 35–55 (INPYVLGFIIFVVVGSTLLQI) traverse the membrane as a helical; Anchor for type IV membrane protein segment. Over 56-59 (LKGQ) the chain is Extracellular.

Belongs to the RAMP4 family.

The protein resides in the membrane. The protein localises to the endoplasmic reticulum membrane. Functionally, may interact with target proteins during translocation into the lumen of the endoplasmic reticulum. May protect unfolded target proteins against degradation and facilitate correct glycosylation. The protein is Probable stress-associated endoplasmic reticulum protein (serp) of Dictyostelium discoideum (Social amoeba).